Here is a 486-residue protein sequence, read N- to C-terminus: Glutamate--tRNA ligase (486 aa).

The short motif at 11–21 (PSPTGLLHIGN) is the 'HIGH' region element. The short motif at 255–259 (KLSKR) is the 'KMSKS' region element. Lys258 is an ATP binding site.

It belongs to the class-I aminoacyl-tRNA synthetase family. Glutamate--tRNA ligase type 1 subfamily. Monomer.

The protein localises to the cytoplasm. It catalyses the reaction tRNA(Glu) + L-glutamate + ATP = L-glutamyl-tRNA(Glu) + AMP + diphosphate. In terms of biological role, catalyzes the attachment of glutamate to tRNA(Glu) in a two-step reaction: glutamate is first activated by ATP to form Glu-AMP and then transferred to the acceptor end of tRNA(Glu). This is Glutamate--tRNA ligase from Streptococcus pneumoniae (strain ATCC BAA-255 / R6).